Here is a 128-residue protein sequence, read N- to C-terminus: Transcription antitermination protein NusB (128 aa).

This sequence belongs to the NusB family.

Its function is as follows. Involved in transcription antitermination. Required for transcription of ribosomal RNA (rRNA) genes. Binds specifically to the boxA antiterminator sequence of the ribosomal RNA (rrn) operons. This Exiguobacterium sp. (strain ATCC BAA-1283 / AT1b) protein is Transcription antitermination protein NusB.